Reading from the N-terminus, the 516-residue chain is Squalene epoxidase 4 (516 aa).

The next 2 membrane-spanning stretches (helical) occupy residues 2 to 22 (TYAW…FHLI) and 43 to 63 (ATDV…YALA). FAD contacts are provided by residues 53-54 (VA), 73-74 (ER), Arg-81, Arg-153, Val-169, Asp-335, and Met-348. The helical transmembrane segment at 435–455 (ILGGMNPHPLTLVLHLVAITL) threads the bilayer.

This sequence belongs to the squalene monooxygenase family. Requires FAD as cofactor. Expressed mainly in seedlings and inflorescences.

Its subcellular location is the membrane. It catalyses the reaction squalene + reduced [NADPH--hemoprotein reductase] + O2 = (S)-2,3-epoxysqualene + oxidized [NADPH--hemoprotein reductase] + H2O + H(+). It functions in the pathway terpene metabolism; lanosterol biosynthesis; lanosterol from farnesyl diphosphate: step 2/3. Functionally, catalyzes the stereospecific oxidation of squalene to (S)-2,3-epoxysqualene, and is considered to be a rate-limiting enzyme in steroid biosynthesis. This is Squalene epoxidase 4 (SQE4) from Arabidopsis thaliana (Mouse-ear cress).